Consider the following 943-residue polypeptide: U3 small nucleolar RNA-associated protein 12 (943 aa).

10 WD repeats span residues Ala-77 to Asp-107, Gly-119 to Asp-149, Ser-161 to Asp-190, Ala-202 to Lys-230, Gly-389 to Asn-418, Phe-428 to Asp-458, Ala-471 to Asp-501, Gly-571 to Gly-601, Ala-613 to Asp-643, and Ala-655 to Glu-685. Positions Glu-715–His-739 are disordered.

The protein belongs to the WD repeat WDR3/UTP12 family. Interacts with snoRNA U3. Interacts with MPP10. Component of the ribosomal small subunit (SSU) processome composed of at least 40 protein subunits and snoRNA U3.

Its subcellular location is the nucleus. It is found in the nucleolus. Involved in nucleolar processing of pre-18S ribosomal RNA. In Saccharomyces cerevisiae (strain ATCC 204508 / S288c) (Baker's yeast), this protein is U3 small nucleolar RNA-associated protein 12 (DIP2).